The sequence spans 379 residues: Glutamate 5-kinase (379 aa).

An ATP-binding site is contributed by Lys-19. Ser-59, Asp-146, and Asn-158 together coordinate substrate. ATP is bound by residues 178-179 (TD) and 220-226 (TGGMATK). Positions 285–363 (SGDIIIDDGA…KDIISILGHD (79 aa)) constitute a PUA domain.

Belongs to the glutamate 5-kinase family.

It localises to the cytoplasm. The catalysed reaction is L-glutamate + ATP = L-glutamyl 5-phosphate + ADP. The protein operates within amino-acid biosynthesis; L-proline biosynthesis; L-glutamate 5-semialdehyde from L-glutamate: step 1/2. Functionally, catalyzes the transfer of a phosphate group to glutamate to form L-glutamate 5-phosphate. This Vibrio parahaemolyticus serotype O3:K6 (strain RIMD 2210633) protein is Glutamate 5-kinase.